We begin with the raw amino-acid sequence, 338 residues long: UPF0324 membrane protein TauZ (338 aa).

Transmembrane regions (helical) follow at residues 12 to 31 (IEAA…TAQF), 36 to 55 (YGAP…NFLA), 75 to 92 (LGVA…LAAL), 96 to 118 (AIAL…SRLV), 125 to 147 (ALLT…AAVL), 162 to 184 (LSVT…FFGF), 191 to 213 (VFLG…IGPE), 223 to 245 (LIRV…ARGL), 258 to 280 (PGFV…PAAV), and 315 to 337 (AIAL…LHVL).

It belongs to the UPF0324 family.

Its subcellular location is the cell membrane. The sequence is that of UPF0324 membrane protein TauZ (tauZ) from Paracoccus denitrificans.